The following is a 524-amino-acid chain: MSDPLIKRALVSVSDKTGIVDFCRELSSLGVEIFSTGGTLKALQDSGVKAASISLITGFPEIMDGRVKTLHPKIHGGLLAVRDNADHVAQAVENGIGFIDMVVVNLYPFEATVARPGVSFEDAIENIDIGGPSMLRSAAKNNESVTVLTDSADYPCVLAEMRSSGGRTTRATRLRLARQVFQLTSRYDGAIARYLTGAEGAAPAAAETMTVKLERELDMRYGENPHQSAGFYTLTDGEGTRSFGDYFEKLHGKELSYNNMLDIAAASGLVEEFRGEEPSVVIIKHTNPCGVAQAPTLVEAWHNAFATDTQAPFGGIIAFNRPLDMVTAEAVNGIFTEILIAPSYEEGVLDLLMKKKDRRLLVQKQALPKGGWEFKSTPFGMLVQERDSKIVAREDLNVVTKRQPTEEELGDLMFAWKICKHIKSNTILYVKNRRTFGVGAGQMSRVDSSKIARWKASEVNLDLHGSVVASDAFFPFADGLLAAAEAGVTAVIQPGGSIRDNEVIEAADANNLAMVFTGMRHFKH.

The region spanning 1 to 149 is the MGS-like domain; sequence MSDPLIKRAL…KNNESVTVLT (149 aa).

Belongs to the PurH family.

The catalysed reaction is (6R)-10-formyltetrahydrofolate + 5-amino-1-(5-phospho-beta-D-ribosyl)imidazole-4-carboxamide = 5-formamido-1-(5-phospho-D-ribosyl)imidazole-4-carboxamide + (6S)-5,6,7,8-tetrahydrofolate. The enzyme catalyses IMP + H2O = 5-formamido-1-(5-phospho-D-ribosyl)imidazole-4-carboxamide. It participates in purine metabolism; IMP biosynthesis via de novo pathway; 5-formamido-1-(5-phospho-D-ribosyl)imidazole-4-carboxamide from 5-amino-1-(5-phospho-D-ribosyl)imidazole-4-carboxamide (10-formyl THF route): step 1/1. It functions in the pathway purine metabolism; IMP biosynthesis via de novo pathway; IMP from 5-formamido-1-(5-phospho-D-ribosyl)imidazole-4-carboxamide: step 1/1. In Chlorobium luteolum (strain DSM 273 / BCRC 81028 / 2530) (Pelodictyon luteolum), this protein is Bifunctional purine biosynthesis protein PurH.